The chain runs to 378 residues: Chaperone protein DnaJ (378 aa).

The J domain occupies 5 to 70; the sequence is DYYEVLGVAK…QKRAAYDQYG (66 aa). The segment at 138–216 adopts a CR-type zinc-finger fold; the sequence is GYDTQIRVPS…CHGSGKVKET (79 aa). C151, C154, C168, C171, C190, C193, C204, and C207 together coordinate Zn(2+). CXXCXGXG motif repeat units lie at residues 151–158, 168–175, 190–197, and 204–211; these read CEVCHGSG, CPTCHGQG, CPKCHGTG, and CAHCHGSG.

The protein belongs to the DnaJ family. As to quaternary structure, homodimer. Zn(2+) is required as a cofactor.

The protein localises to the cytoplasm. Its function is as follows. Participates actively in the response to hyperosmotic and heat shock by preventing the aggregation of stress-denatured proteins and by disaggregating proteins, also in an autonomous, DnaK-independent fashion. Unfolded proteins bind initially to DnaJ; upon interaction with the DnaJ-bound protein, DnaK hydrolyzes its bound ATP, resulting in the formation of a stable complex. GrpE releases ADP from DnaK; ATP binding to DnaK triggers the release of the substrate protein, thus completing the reaction cycle. Several rounds of ATP-dependent interactions between DnaJ, DnaK and GrpE are required for fully efficient folding. Also involved, together with DnaK and GrpE, in the DNA replication of plasmids through activation of initiation proteins. This is Chaperone protein DnaJ from Burkholderia vietnamiensis (strain G4 / LMG 22486) (Burkholderia cepacia (strain R1808)).